The primary structure comprises 929 residues: SED5-binding protein 3 (929 aa).

S15 is subject to Phosphoserine. Polar residues predominate over residues 18-28 (ESTVHTGGASS). The tract at residues 18–52 (ESTVHTGGASSKKSRRPHRAYHNFSSGTVPTLGNS) is disordered. Over residues 29 to 38 (KKSRRPHRAY) the composition is skewed to basic residues. Positions 40–52 (NFSSGTVPTLGNS) are enriched in polar residues. T72 carries the post-translational modification Phosphothreonine. Residues S83, S85, S94, S101, and S110 each carry the phosphoserine modification. T216 is subject to Phosphothreonine. Residues 220 to 244 (CRRCRAYANPKFQFTYDSSVICNIC) form a zinc finger-like region.

It belongs to the SEC23/SEC24 family. SEC24 subfamily. As to quaternary structure, COPII is composed of at least five proteins: the SEC23/24 complex, the SEC13/31 complex and SAR1. Binds to SED5. Interacts with GHR1.

It localises to the cytoplasm. The protein localises to the golgi apparatus membrane. It is found in the endoplasmic reticulum membrane. Its function is as follows. Component of the COPII coat, that covers ER-derived vesicles involved in transport from the endoplasmic reticulum to the Golgi apparatus. COPII acts in the cytoplasm to promote the transport of secretory, plasma membrane, and vacuolar proteins from the endoplasmic reticulum to the Golgi complex. The sequence is that of SED5-binding protein 3 (SFB3) from Saccharomyces cerevisiae (strain ATCC 204508 / S288c) (Baker's yeast).